Reading from the N-terminus, the 33-residue chain is Photosystem II reaction center protein Psb30 (33 aa).

The helical transmembrane segment at 5 to 25 (VIAQLASLALIIVLGPLVIGL) threads the bilayer.

Belongs to the Psb30/Ycf12 family. In terms of assembly, PSII is composed of 1 copy each of membrane proteins PsbA, PsbB, PsbC, PsbD, PsbE, PsbF, PsbH, PsbI, PsbJ, PsbK, PsbL, PsbM, PsbT, PsbX, PsbY, PsbZ, Psb30/Ycf12, peripheral proteins of the oxygen-evolving complex and a large number of cofactors. It forms dimeric complexes.

The protein resides in the plastid. Its subcellular location is the chloroplast thylakoid membrane. In terms of biological role, a core subunit of photosystem II (PSII), probably helps stabilize the reaction center. This Chara vulgaris (Common stonewort) protein is Photosystem II reaction center protein Psb30.